The sequence spans 145 residues: UPF0310 protein Mvan_0064 (145 aa).

This sequence belongs to the UPF0310 family.

The chain is UPF0310 protein Mvan_0064 from Mycolicibacterium vanbaalenii (strain DSM 7251 / JCM 13017 / BCRC 16820 / KCTC 9966 / NRRL B-24157 / PYR-1) (Mycobacterium vanbaalenii).